A 407-amino-acid chain; its full sequence is Multifunctional CCA protein (407 aa).

ATP contacts are provided by G8 and R11. CTP is bound by residues G8 and R11. The Mg(2+) site is built by D21 and D23. Residues R91, R137, and R140 each contribute to the ATP site. Residues R91, R137, and R140 each coordinate CTP. In terms of domain architecture, HD spans 228 to 329 (TGIHTLLVAE…VKIFNKLDVW (102 aa)).

It belongs to the tRNA nucleotidyltransferase/poly(A) polymerase family. Bacterial CCA-adding enzyme type 1 subfamily. In terms of assembly, monomer. Can also form homodimers and oligomers. The cofactor is Mg(2+). It depends on Ni(2+) as a cofactor.

It carries out the reaction a tRNA precursor + 2 CTP + ATP = a tRNA with a 3' CCA end + 3 diphosphate. The enzyme catalyses a tRNA with a 3' CCA end + 2 CTP + ATP = a tRNA with a 3' CCACCA end + 3 diphosphate. Its function is as follows. Catalyzes the addition and repair of the essential 3'-terminal CCA sequence in tRNAs without using a nucleic acid template. Adds these three nucleotides in the order of C, C, and A to the tRNA nucleotide-73, using CTP and ATP as substrates and producing inorganic pyrophosphate. tRNA 3'-terminal CCA addition is required both for tRNA processing and repair. Also involved in tRNA surveillance by mediating tandem CCA addition to generate a CCACCA at the 3' terminus of unstable tRNAs. While stable tRNAs receive only 3'-terminal CCA, unstable tRNAs are marked with CCACCA and rapidly degraded. In Vibrio vulnificus (strain YJ016), this protein is Multifunctional CCA protein.